Here is a 147-residue protein sequence, read N- to C-terminus: uncharacterized protein (147 aa).

In terms of domain architecture, HTH LytTR-type spans 44–147 (LVGYIDKEIH…LKSIKERLSI (104 aa)).

It is found in the cytoplasm. This is an uncharacterized protein from Staphylococcus aureus (strain COL).